The following is a 728-amino-acid chain: Phosphoribosylformylglycinamidine synthase subunit PurL (728 aa).

Residue histidine 42 is part of the active site. Tyrosine 45 and lysine 84 together coordinate ATP. Glutamate 86 contacts Mg(2+). Substrate contacts are provided by residues 87 to 90 (SHNH) and arginine 109. Residue histidine 88 is the Proton acceptor of the active site. Aspartate 110 contacts Mg(2+). Glutamine 237 contacts substrate. Aspartate 265 serves as a coordination point for Mg(2+). 309–311 (ESQ) contributes to the substrate binding site. ATP is bound by residues aspartate 491 and glycine 528. Mg(2+) is bound at residue asparagine 529. Serine 531 contacts substrate.

The protein belongs to the FGAMS family. Monomer. Part of the FGAM synthase complex composed of 1 PurL, 1 PurQ and 2 PurS subunits.

Its subcellular location is the cytoplasm. It catalyses the reaction N(2)-formyl-N(1)-(5-phospho-beta-D-ribosyl)glycinamide + L-glutamine + ATP + H2O = 2-formamido-N(1)-(5-O-phospho-beta-D-ribosyl)acetamidine + L-glutamate + ADP + phosphate + H(+). It participates in purine metabolism; IMP biosynthesis via de novo pathway; 5-amino-1-(5-phospho-D-ribosyl)imidazole from N(2)-formyl-N(1)-(5-phospho-D-ribosyl)glycinamide: step 1/2. In terms of biological role, part of the phosphoribosylformylglycinamidine synthase complex involved in the purines biosynthetic pathway. Catalyzes the ATP-dependent conversion of formylglycinamide ribonucleotide (FGAR) and glutamine to yield formylglycinamidine ribonucleotide (FGAM) and glutamate. The FGAM synthase complex is composed of three subunits. PurQ produces an ammonia molecule by converting glutamine to glutamate. PurL transfers the ammonia molecule to FGAR to form FGAM in an ATP-dependent manner. PurS interacts with PurQ and PurL and is thought to assist in the transfer of the ammonia molecule from PurQ to PurL. This is Phosphoribosylformylglycinamidine synthase subunit PurL from Campylobacter jejuni subsp. doylei (strain ATCC BAA-1458 / RM4099 / 269.97).